We begin with the raw amino-acid sequence, 207 residues long: Glycerol-3-phosphate acyltransferase 1 (207 aa).

5 consecutive transmembrane segments (helical) span residues 3-23 (YVIA…QIVG), 53-73 (IVVA…LLIL), 85-105 (HIYI…PITM), 127-147 (IALI…YLAV), and 154-174 (ISFL…IVVG).

Belongs to the PlsY family. In terms of assembly, probably interacts with PlsX.

The protein resides in the cell membrane. It catalyses the reaction an acyl phosphate + sn-glycerol 3-phosphate = a 1-acyl-sn-glycero-3-phosphate + phosphate. It participates in lipid metabolism; phospholipid metabolism. Functionally, catalyzes the transfer of an acyl group from acyl-phosphate (acyl-PO(4)) to glycerol-3-phosphate (G3P) to form lysophosphatidic acid (LPA). This enzyme utilizes acyl-phosphate as fatty acyl donor, but not acyl-CoA or acyl-ACP. The protein is Glycerol-3-phosphate acyltransferase 1 of Oceanobacillus iheyensis (strain DSM 14371 / CIP 107618 / JCM 11309 / KCTC 3954 / HTE831).